Reading from the N-terminus, the 887-residue chain is Dystrophin-like protein 1 (887 aa).

Residues 30–197 enclose the PID domain; sequence YQHGIHFEAK…KISMQSEDEA (168 aa). Basic and acidic residues-rich tracts occupy residues 176-186 and 205-216; these read MQEKHEDEAAK and IEERGGREEDSR. 5 disordered regions span residues 176–254, 506–606, 641–753, 804–839, and 853–887; these read MQEK…GTAI, EIHH…QYER, QFDM…KNTA, IAEEPEPSEMDPNRNNLPSSTNSSMKRRGFLPPPNT, and NVDRSKLPETSLLTRLTRQAQGDNSLGNLPNGYPQ. Residues 242 to 254 show a composition bias toward polar residues; that stretch reads KPSTTSSSGGTAI. Residues 434 to 506 are a coiled coil; that stretch reads QLMRSQLDQA…QMLETKITSE (73 aa). Residues 510 to 519 are compositionally biased toward low complexity; sequence SSSQPPQHQP. The segment covering 573–588 has biased composition (basic and acidic residues); the sequence is KESKERRKDEGTRTEP. Over residues 597–606 the composition is skewed to polar residues; it reads DYSSSDQYER. 2 stretches are compositionally biased toward polar residues: residues 816-827 and 863-887; these read NRNNLPSSTNSS and SLLTRLTRQAQGDNSLGNLPNGYPQ.

In terms of assembly, component of the dystrophin glycoprotein complex (DGC). Interacts with zyx-1. Expressed in muscles of the head, body wall and vulva. In some animals, weaker expression is observed in the intestinal muscles (at protein level). Isoform a is expressed in lateral neurons SDQL and SDQR.

Functionally, together with dys-1 and hlh-1, participates in a common muscular function. The sequence is that of Dystrophin-like protein 1 from Caenorhabditis elegans.